We begin with the raw amino-acid sequence, 331 residues long: Sideroflexin-5 (331 aa).

4 consecutive transmembrane segments (helical) span residues 104–126 (PFGW…LLFW), 153–175 (YIGA…TYFI), 243–265 (TTMV…MPYL), and 278–300 (HIFV…ALAL).

Belongs to the sideroflexin family.

The protein localises to the mitochondrion inner membrane. It carries out the reaction citrate(in) = citrate(out). Mitochondrial amino-acid transporter. This chain is Sideroflexin-5, found in Caenorhabditis elegans.